The following is a 576-amino-acid chain: Aspartate--tRNA ligase (576 aa).

Glutamate 173 serves as a coordination point for L-aspartate. Residues 197 to 200 (QLFK) are aspartate. Arginine 219 contributes to the L-aspartate binding site. Residues 219 to 221 (RDE) and glutamine 228 each bind ATP. Position 438 (histidine 438) interacts with L-aspartate. Position 470 (glutamate 470) interacts with ATP. Residue arginine 477 coordinates L-aspartate. 522–525 (GLDR) lines the ATP pocket.

This sequence belongs to the class-II aminoacyl-tRNA synthetase family. Type 1 subfamily. As to quaternary structure, homodimer.

The protein resides in the cytoplasm. It carries out the reaction tRNA(Asp) + L-aspartate + ATP = L-aspartyl-tRNA(Asp) + AMP + diphosphate. Functionally, catalyzes the attachment of L-aspartate to tRNA(Asp) in a two-step reaction: L-aspartate is first activated by ATP to form Asp-AMP and then transferred to the acceptor end of tRNA(Asp). This chain is Aspartate--tRNA ligase, found in Aster yellows witches'-broom phytoplasma (strain AYWB).